We begin with the raw amino-acid sequence, 164 residues long: 6,7-dimethyl-8-ribityllumazine synthase (164 aa).

Residues phenylalanine 22, alanine 56–glutamate 58, and alanine 80–isoleucine 82 contribute to the 5-amino-6-(D-ribitylamino)uracil site. A (2S)-2-hydroxy-3-oxobutyl phosphate-binding site is contributed by aspartate 85–threonine 86. The active-site Proton donor is the histidine 88. Residue leucine 113 coordinates 5-amino-6-(D-ribitylamino)uracil. Arginine 127 is a binding site for (2S)-2-hydroxy-3-oxobutyl phosphate.

This sequence belongs to the DMRL synthase family.

It carries out the reaction (2S)-2-hydroxy-3-oxobutyl phosphate + 5-amino-6-(D-ribitylamino)uracil = 6,7-dimethyl-8-(1-D-ribityl)lumazine + phosphate + 2 H2O + H(+). Its pathway is cofactor biosynthesis; riboflavin biosynthesis; riboflavin from 2-hydroxy-3-oxobutyl phosphate and 5-amino-6-(D-ribitylamino)uracil: step 1/2. Catalyzes the formation of 6,7-dimethyl-8-ribityllumazine by condensation of 5-amino-6-(D-ribitylamino)uracil with 3,4-dihydroxy-2-butanone 4-phosphate. This is the penultimate step in the biosynthesis of riboflavin. The sequence is that of 6,7-dimethyl-8-ribityllumazine synthase from Gemmatimonas aurantiaca (strain DSM 14586 / JCM 11422 / NBRC 100505 / T-27).